Here is a 250-residue protein sequence, read N- to C-terminus: AA9 family lytic polysaccharide monooxygenase B (250 aa).

The signal sequence occupies residues 1–21 (MTLSKITSIAGLLASASLVAG). Cu(2+)-binding residues include H22 and H107. Residue H22 is modified to Methylhistidine. Intrachain disulfides connect C77/C199 and C118/C122. N-linked (GlcNAc...) asparagine glycosylation is present at N159. The O2 site is built by H185 and Q194. Residue Y196 participates in Cu(2+) binding.

This sequence belongs to the polysaccharide monooxygenase AA9 family. The cofactor is Cu(2+). Post-translationally, the catalytically essential N-terminal histidine His-22 is post-translationally modified by methylation to prevent protonation of the histidine side chain, and protect the critical active site of the enzyme from oxidative damage.

It is found in the secreted. It carries out the reaction [(1-&gt;4)-beta-D-glucosyl]n+m + reduced acceptor + O2 = 4-dehydro-beta-D-glucosyl-[(1-&gt;4)-beta-D-glucosyl]n-1 + [(1-&gt;4)-beta-D-glucosyl]m + acceptor + H2O.. Lytic polysaccharide monooxygenase (LPMO) that depolymerizes crystalline and amorphous polysaccharides via the oxidation of scissile alpha- or beta-(1-4)-glycosidic bonds, yielding C1 and C4 oxidation products. Catalysis by LPMOs requires the reduction of the active-site copper from Cu(II) to Cu(I) by a reducing agent and H(2)O(2) or O(2) as a cosubstrate. Shows activity on phosphoric acid swollen cellulose, on NaOH pretreated soy spent flakes as well as on crystalline cellulose (Avicel). Does not have a positive effect on cel6A activity, but acts synergistically with endoglucanase egl7. The protein is AA9 family lytic polysaccharide monooxygenase B of Aspergillus fumigatus (strain ATCC MYA-4609 / CBS 101355 / FGSC A1100 / Af293) (Neosartorya fumigata).